The sequence spans 536 residues: MTEKDTDGADGLTKAKSNAVSEDYETVNHVTGLKLAVIVTGLCLSVLLVALDNTIIATAIPKITDQFHALEDIGWYGSSYLLTICAFQLIFGKIYTFFPVKWVFLIAITIFEIGSAICGAAPNSTALIIGRAVAGIGSAGIFSGALIIIAYSIPLEKRPAYTGAIGGMYGIASVAGPLMGGAFTDHISWRWCFYINLPIGAVTILSILIFLKHPKQKLDNNQTWKARLLKLDPIGTAFFMPSIICLLLALQWGGTKYPWNNGRIIALFVVFAVLISGFIYFQIRGGDSATVPPRILKKRSIASGAFFLFTIGSAFFIMVYYLPIWFQAIKGASATSSGIMNIPMVLSLVVLSIASGITVTAIGYYAPLYYVSTVLTSIGAGLLTTFTTETSKGKWIGYQIIFGAGVGTGLQLSIIAAQAVLPLEDVAVGTVIMMFCQTLGGALFVSVGQNVFTNLLVKGVVNAAPGLDPQVVLRVGATQLKNMIPPQFLDGVQVAYNDALTKTWYVATALAALSVIGSVGMEWKSVKGKKIEPAAA.

3 consecutive transmembrane segments (helical) span residues 30–50 (VTGL…LLVA), 80–100 (YLLT…FFPV), and 102–122 (WVFL…GAAP). Asn-123 carries N-linked (GlcNAc...) asparagine glycosylation. The next 3 membrane-spanning stretches (helical) occupy residues 133–153 (VAGI…AYSI), 163–183 (GAIG…GGAF), and 191–211 (WCFY…LIFL). Asn-221 carries an N-linked (GlcNAc...) asparagine glycan. Transmembrane regions (helical) follow at residues 234–254 (IGTA…QWGG), 264–284 (IIAL…FQIR), 306–326 (FFLF…PIWF), 342–362 (IPMV…VTAI), 366–386 (APLY…LTTF), 400–420 (IIFG…AQAV), 426–446 (VAVG…LFVS), and 503–523 (TWYV…GMEW).

This sequence belongs to the major facilitator superfamily. TCR/Tet family.

The protein localises to the cell membrane. Its function is as follows. MFS-type efflux pump involved in the modulation susceptibility to azoles, including fluconazole, itraconazole, miconazole and voriconazole. Also confers increased resistance chloramphenicol and thiamphenicol, suggesting that it acts as a pleiotropic drug transporter with a broad substrate spectrum. Finally, increases the tolerance to cycloheximide when expressed in S.cerevisiae, but not in dermatophyte species. This chain is MFS-type efflux pump MFS1, found in Arthroderma benhamiae (strain ATCC MYA-4681 / CBS 112371) (Trichophyton mentagrophytes).